The following is a 93-amino-acid chain: Cell division protein FtsB (93 aa).

At 1–3 (MRL) the chain is on the cytoplasmic side. A helical membrane pass occupies residues 4-21 (FILVLTLLFGWLQYTLWF). Over 22–93 (GKNGVSDYYT…FYRIVGEENQ (72 aa)) the chain is Periplasmic. The stretch at 42–75 (VNTKLQARNSEMYAEIDDLKQGLDAIEERARHEL) forms a coiled coil.

The protein belongs to the FtsB family. Part of a complex composed of FtsB, FtsL and FtsQ.

It localises to the cell inner membrane. Essential cell division protein. May link together the upstream cell division proteins, which are predominantly cytoplasmic, with the downstream cell division proteins, which are predominantly periplasmic. The sequence is that of Cell division protein FtsB from Vibrio vulnificus (strain YJ016).